Consider the following 338-residue polypeptide: MKFLDKAIIHVIAGNGGHGRTSFRREKYIPKGGPDGGDGGNGGNVWLQTVTNLNTLIDFKFTKIFKAQDGQQGFNKKKTGKKGSDIVIQIPIGTKIIDHNTNEIIEDMIQDKQLVLVAKGGWHGLGNTRFKSSTNRIPIKHTKGTQGEFRILRLELILIAHVGTLGLPNSGKSTLVRNISNAKTKIANYPFTTLKPVLGTVKINHKEFFVIADIPGLIQGASHGIGLGYQFLKHLERCHLLLHIIDISQINFKNTITNIHVILDELKTYNKILHNKPIWFVFNKIDLIDDIDINTKLKSILEKLGSIQQYFLISAIKKTGLKKIVKKIYDFLKNKNLL.

One can recognise an Obg domain in the interval 1–159; that stretch reads MKFLDKAIIH…RILRLELILI (159 aa). The OBG-type G domain maps to 160–333; the sequence is AHVGTLGLPN…IVKKIYDFLK (174 aa). GTP is bound by residues 166-173, 191-195, 213-216, 283-286, and 314-316; these read GLPNSGKS, FTTLK, DIPG, NKID, and SAI. Mg(2+)-binding residues include serine 173 and threonine 193.

Belongs to the TRAFAC class OBG-HflX-like GTPase superfamily. OBG GTPase family. In terms of assembly, monomer. The cofactor is Mg(2+).

Its subcellular location is the cytoplasm. In terms of biological role, an essential GTPase which binds GTP, GDP and possibly (p)ppGpp with moderate affinity, with high nucleotide exchange rates and a fairly low GTP hydrolysis rate. Plays a role in control of the cell cycle, stress response, ribosome biogenesis and in those bacteria that undergo differentiation, in morphogenesis control. This Buchnera aphidicola subsp. Baizongia pistaciae (strain Bp) protein is GTPase Obg.